Reading from the N-terminus, the 36-residue chain is U4-ctenitoxin-Pr1a (36 aa).

Disulfide bonds link Cys3/Cys17, Cys10/Cys22, and Cys16/Cys34.

As to expression, expressed by the venom gland.

The protein resides in the secreted. Its function is as follows. Neurotoxin. Causes spastic paralysis and death in mice. Moderate inhibitor of L-type calcium channels (Cav1/CACNA1). The protein is U4-ctenitoxin-Pr1a of Phoneutria reidyi (Brazilian Amazonian armed spider).